Consider the following 370-residue polypeptide: Histidinol-phosphate aminotransferase (370 aa).

Lysine 230 is modified (N6-(pyridoxal phosphate)lysine).

Belongs to the class-II pyridoxal-phosphate-dependent aminotransferase family. Histidinol-phosphate aminotransferase subfamily. As to quaternary structure, homodimer. The cofactor is pyridoxal 5'-phosphate.

It carries out the reaction L-histidinol phosphate + 2-oxoglutarate = 3-(imidazol-4-yl)-2-oxopropyl phosphate + L-glutamate. Its pathway is amino-acid biosynthesis; L-histidine biosynthesis; L-histidine from 5-phospho-alpha-D-ribose 1-diphosphate: step 7/9. The polypeptide is Histidinol-phosphate aminotransferase (Leptospira interrogans serogroup Icterohaemorrhagiae serovar Lai (strain 56601)).